The following is a 394-amino-acid chain: Succinate--CoA ligase [ADP-forming] subunit beta (394 aa).

ATP is bound by residues Lys-46, Gly-53–Gly-55, Glu-99, Cys-102, and Glu-107. Residues Asn-199 and Asp-213 each coordinate Mg(2+). Residues Asn-264 and Gly-321–Val-323 contribute to the substrate site.

It belongs to the succinate/malate CoA ligase beta subunit family. As to quaternary structure, heterotetramer of two alpha and two beta subunits. Requires Mg(2+) as cofactor.

It catalyses the reaction succinate + ATP + CoA = succinyl-CoA + ADP + phosphate. The catalysed reaction is GTP + succinate + CoA = succinyl-CoA + GDP + phosphate. The protein operates within carbohydrate metabolism; tricarboxylic acid cycle; succinate from succinyl-CoA (ligase route): step 1/1. Its function is as follows. Succinyl-CoA synthetase functions in the citric acid cycle (TCA), coupling the hydrolysis of succinyl-CoA to the synthesis of either ATP or GTP and thus represents the only step of substrate-level phosphorylation in the TCA. The beta subunit provides nucleotide specificity of the enzyme and binds the substrate succinate, while the binding sites for coenzyme A and phosphate are found in the alpha subunit. The sequence is that of Succinate--CoA ligase [ADP-forming] subunit beta from Haemophilus influenzae (strain PittGG).